Reading from the N-terminus, the 163-residue chain is MPSFDIVSEITMHEVRNAVENANRVLSTRYDFRGVEAVIELNEKNESIKLTTESDFQLEQLIEILIGSCVKRGIEHNSLDIPSDAEHHGKLYSKEIKLKQGIETEMAKKITKLIKDSKIKVQTQIQGEQVRVTGKSRDDLQAAIQLVKGAELGQPFQFNNFRD.

The protein belongs to the YajQ family.

In terms of biological role, nucleotide-binding protein. The protein is Nucleotide-binding protein APJL_1242 of Actinobacillus pleuropneumoniae serotype 3 (strain JL03).